We begin with the raw amino-acid sequence, 156 residues long: Oxidized purine nucleoside triphosphate hydrolase (156 aa).

The region spanning 3–132 is the Nudix hydrolase domain; it reads TSKLLTLVLV…WFPLMLQKKR (130 aa). Thr8 contributes to the 2-oxo-dATP binding site. Residues Thr8, Lys23, Asn33, and 35–38 contribute to the O(6)-methyl-dGMP site; that span reads FGGK. Lys23 is a binding site for 8-oxo-dGTP. Residues Asn33 and 35–38 each bind 2-oxo-dATP; that span reads FGGK. Residues Gly36, Glu52, Glu55, Glu56, and Glu100 each contribute to the Mg(2+) site. A Nudix box motif is present at residues 37-58; it reads GKVQTGETIEQAARRELLEESG. 117–120 contributes to the 2-oxo-dATP binding site; sequence WADD. 117–120 is an O(6)-methyl-dGMP binding site; it reads WADD.

This sequence belongs to the Nudix hydrolase family. As to quaternary structure, monomer. Mg(2+) is required as a cofactor.

Its subcellular location is the cytoplasm. It is found in the cytosol. The protein localises to the mitochondrion matrix. The protein resides in the nucleus. It catalyses the reaction 2-oxo-dATP + H2O = 2-oxo-dAMP + diphosphate + H(+). The catalysed reaction is 2-oxo-ATP + H2O = 2-oxo-AMP + diphosphate + H(+). It carries out the reaction 8-oxo-dGTP + H2O = 8-oxo-dGMP + diphosphate + H(+). The enzyme catalyses 8-oxo-dATP + H2O = 8-oxo-dAMP + diphosphate + H(+). It catalyses the reaction O(6)-methyl-dGTP + H2O = O(6)-methyl-dGMP + diphosphate + H(+). The catalysed reaction is N(6)-methyl-dATP + H2O = N(6)-methyl-dAMP + diphosphate + H(+). It carries out the reaction N(6)-methyl-ATP + H2O = N(6)-methyl-AMP + diphosphate + H(+). Its activity is regulated as follows. Inhibited by TH588. Oxidized purine nucleoside triphosphate hydrolase which is a prominent sanitizer of the oxidized nucleotide pool. Catalyzes the hydrolysis of 2-oxo-dATP (2-hydroxy-dATP) into 2-oxo-dAMP. Also has a significant hydrolase activity toward 2-oxo-ATP, 8-oxo-dGTP and 8-oxo-dATP. Through the hydrolysis of oxidized purine nucleoside triphosphates, prevents their incorporation into DNA and the subsequent transversions A:T to C:G and G:C to T:A. Also catalyzes the hydrolysis of methylated purine nucleoside triphosphate preventing their integration into DNA. Through this antimutagenic activity protects cells from oxidative stress. In Danio rerio (Zebrafish), this protein is Oxidized purine nucleoside triphosphate hydrolase (nudt1).